Reading from the N-terminus, the 262-residue chain is Nurim (262 aa).

Topologically, residues 1–4 (MAPA) are nuclear. A helical membrane pass occupies residues 5 to 28 (LLLVPAALASFVLAFGTGVEFVRF). The Perinuclear space segment spans residues 29 to 58 (TSLRPLLGGIPESGGPDARHGWLAALQDRS). Residues 59 to 80 (ILASLAWDLCLLLLFVVQHSLM) traverse the membrane as a helical segment. Residues 81-97 (ATEAVKAWTSRYFGVLQ) are Nuclear-facing. A helical transmembrane segment spans residues 98–114 (RSLYVACTALALQLVMR). The Perinuclear space portion of the chain corresponds to 115–133 (YWEATPRGPVLWEARAEPW). Residues 134 to 164 (ATWVPLLCFVLHVVSWLLIFSILLVFDYAEL) traverse the membrane as a helical segment. The Nuclear portion of the chain corresponds to 165-191 (MGLKQVYYHVLGLGEPLSLKSPRALRL). The helical transmembrane segment at 192–210 (FSHLRHPVCVELLTVLWVV) threads the bilayer. Residues 211-216 (PTLGTD) lie on the Perinuclear space side of the membrane. Residues 217 to 234 (RLLLALLFTLYLGLAHGL) traverse the membrane as a helical segment. The Nuclear portion of the chain corresponds to 235 to 262 (DQQDLRYLRSQLQRKLQLLSRPQDGEAE).

Belongs to the nurim family.

The protein localises to the nucleus inner membrane. The sequence is that of Nurim (Nrm) from Rattus norvegicus (Rat).